We begin with the raw amino-acid sequence, 87 residues long: U14-lycotoxin-Ls1a (87 aa).

A signal peptide spans 1-20 (MNSKVFAALLLLALSTCVLS). Residues 21–66 (EKYCPTPRNTSCKKMNIRNNCCRDSDCTSNAFCCAEPCGNFCHKAS) enclose the WAP domain. 5 disulfide bridges follow: Cys24–Cys54, Cys32–Cys58, Cys41–Cys53, Cys42–Cys80, and Cys47–Cys62.

This sequence belongs to the venom protein 11 family. 01 (wap-1) subfamily. Contains 5 disulfide bonds. As to expression, expressed by the venom gland.

It is found in the secreted. Functionally, has antibacterial activity. This is U14-lycotoxin-Ls1a from Lycosa singoriensis (Wolf spider).